Consider the following 223-residue polypeptide: DNA mismatch repair protein MutH (223 aa).

This sequence belongs to the MutH family.

The protein resides in the cytoplasm. Its function is as follows. Sequence-specific endonuclease that cleaves unmethylated GATC sequences. It is involved in DNA mismatch repair. This is DNA mismatch repair protein MutH from Shewanella sp. (strain MR-4).